Here is a 1297-residue protein sequence, read N- to C-terminus: Protein Atossa (1297 aa).

Disordered regions lie at residues 1–22 (MIPT…GASA) and 117–149 (TNPY…THQR). The segment covering 133-144 (GSGSTGSPSSSS) has biased composition (low complexity). Residues 174 to 182 (VSLAINDLN) are transactivation domain 1 (TAD1). Disordered regions lie at residues 206–227 (SSAG…NSSD), 287–311 (TPTT…KHGP), 518–655 (GLPH…ETQS), 704–741 (SNGT…SSAD), and 1017–1048 (AAHK…DLES). 2 stretches are compositionally biased toward low complexity: residues 213 to 226 (NNSS…SNSS) and 287 to 305 (TPTT…SSAS). Polar residues predominate over residues 564–578 (SALTPTTTAGGSNCD). Residues 605 to 620 (QKYRKRMQRRDKKRER) are compositionally biased toward basic residues. Low complexity-rich tracts occupy residues 643–655 (SQTQ…ETQS) and 706–716 (GTANGSTNGAT). Positions 717–731 (DDGDDSDTTASEMEE) are enriched in acidic residues. Positions 1074-1132 (LLGNLEESLLQRRLMPKIEVMGFTLQLGASGGFCPTQVNIPAVSYFYELHGETLSTPYL) are required for macropage invasion. Residues 1150-1158 (VQATLLNPI) form a transactivation domain 2 (TAD2) region. Residues 1192–1213 (SQDQDEGHKVPRSPTVTSTTSK) are disordered. Low complexity predominate over residues 1203–1212 (RSPTVTSTTS).

This sequence belongs to the ATOS family. As to expression, expressed in macrophages.

Its subcellular location is the nucleus. Transcription regulator that synchronizes transcriptional and translational programs to promote macrophage invasion of tissues. Required in macrophages for their early invasion into the extended germband. Induces transcriptional expression of metabolic enzymes as well as of the translational regulator pths/DDX47. With pths/DDX47, adjusts transcription and translation of a subset of OXPHOS genes to increase mitochondrial bioenergetics and allow macrophage tissue invasion. The polypeptide is Protein Atossa (Drosophila melanogaster (Fruit fly)).